The following is a 299-amino-acid chain: Fluorinase (299 aa).

Residues D16, 21-23, Y77, S158, D210, N215, 269-270, and 277-279 contribute to the S-adenosyl-L-methionine site; these read DDS, SR, and RNA.

Homohexamer; dimers of trimer.

It catalyses the reaction fluoride + S-adenosyl-L-methionine = 5'-deoxy-5'-fluoroadenosine + L-methionine. Its activity is regulated as follows. Competitively inhibited by S-adenosyl-L-homocysteine (AdoHcy) and S-adenosyl-L-homocysteine (SAH). Sinefungin is only weakly inhibitory. Its function is as follows. Involved in the biosynthesis of fluorometabolites. Catalyzes the formation of a C-F bond by combining S-adenosyl-L-methionine (SAM) and fluoride to generate 5'-fluoro-5'-deoxyadenosine (5'-FDA) and L-methionine. It can also use 2'-deoxyadenosine in place of adenosine as substrate. The polypeptide is Fluorinase (Streptantibioticus cattleyicolor (Streptomyces cattleya)).